A 251-amino-acid chain; its full sequence is 2,3-bisphosphoglycerate-dependent phosphoglycerate mutase (251 aa).

Residues 11-18 (RHGNSDWN), 24-25 (TG), Arg63, 90-93 (ERHY), Lys101, 117-118 (RR), and 185-186 (GN) contribute to the substrate site. The Tele-phosphohistidine intermediate role is filled by His12. Glu90 acts as the Proton donor/acceptor in catalysis. The tract at residues 117-142 (RRSFDVPPPPIDDDDEYSQSRDPRYA) is disordered.

This sequence belongs to the phosphoglycerate mutase family. BPG-dependent PGAM subfamily.

The enzyme catalyses (2R)-2-phosphoglycerate = (2R)-3-phosphoglycerate. Its pathway is carbohydrate degradation; glycolysis; pyruvate from D-glyceraldehyde 3-phosphate: step 3/5. Catalyzes the interconversion of 2-phosphoglycerate and 3-phosphoglycerate. The sequence is that of 2,3-bisphosphoglycerate-dependent phosphoglycerate mutase from Clavibacter michiganensis subsp. michiganensis (strain NCPPB 382).